Reading from the N-terminus, the 959-residue chain is Ataxin-2 homolog (959 aa).

The Sm domain maps to 13-92 (DVLSAINDMI…IVDFAYVTQE (80 aa)). 5 disordered regions span residues 203–378 (AREI…GSRV), 392–484 (TAPK…SVIT), 501–528 (PRVA…HPAM), 697–831 (PPQG…QHIQ), and 867–959 (PMQQ…QSPP). Residues 226-235 (DLDKITRQED) show a composition bias toward basic and acidic residues. Residues 246–260 (NNSFNQQQQQRRNPN) show a composition bias toward low complexity. Residues 270 to 281 (RRAEGLRGDRRN) show a composition bias toward basic and acidic residues. The span at 282–313 (SGSSSANNSRYGAPAAAQQNYSQNQQQQQGQK) shows a compositional bias: low complexity. Polar residues-rich tracts occupy residues 341–356 (RQQQ…NNNV) and 473–484 (VSVTSENDSVIT). Composition is skewed to low complexity over residues 504 to 528 (APAT…HPAM), 697 to 707 (PPQGQQQQPRY), and 715 to 725 (QQQQQQPQQQQ). Polar residues-rich tracts occupy residues 726–742 (FSGE…SQPT) and 756–765 (APQNGNMQAE). Positions 766–788 (SSSNASHSGSTSSQSGQRSGSPP) are enriched in low complexity. A compositionally biased stretch (pro residues) spans 789-798 (GAVPPPPPPQ). Low complexity-rich tracts occupy residues 822–831 (MMQQQQQHIQ), 867–876 (PMQQNQHPQQ), and 902–911 (QQQQQQQQQQ). A compositionally biased stretch (polar residues) spans 912 to 922 (MHRQNSLPQQF). The segment covering 923 to 935 (QGNQGVNPSGQQS) has biased composition (low complexity). Polar residues predominate over residues 948–959 (TPRDQQHSQSPP).

This sequence belongs to the ataxin-2 family. In terms of assembly, interacts (via C-terminus) with szy-20 (via C-terminus); the interaction is RNA independent. Interacts with pab-1. Interacts with gdi-1. As to expression, expressed in the central nervous system, dorsal and ventral nerve cord, intestinal lining and body-wall muscle. Expressed in the gonad.

The protein localises to the cytoplasm. It is found in the nucleus. Functionally, probable RNA-binding protein that negatively regulates the translation of targets. Functions with RNA-binding protein szy-20 to ensure embryonic cell division, and to this end, plays a role in the regulation of centrosome assembly, position and size, and in astral microtubule outgrowth and nucleation. Required for gonad development, germ cell proliferation and for the production of oocytes. Regulates whole body growth and fat accumulation in response to food availability, and this may be through the mTOR pathway, upstream of daf-15 and rheb-1. This is Ataxin-2 homolog from Caenorhabditis elegans.